Consider the following 310-residue polypeptide: tRNA dimethylallyltransferase (310 aa).

14–21 (GPTASGKT) serves as a coordination point for ATP. A substrate-binding site is contributed by 16 to 21 (TASGKT). An interaction with substrate tRNA region spans residues 39–42 (DSMQ).

This sequence belongs to the IPP transferase family. As to quaternary structure, monomer. Mg(2+) serves as cofactor.

It carries out the reaction adenosine(37) in tRNA + dimethylallyl diphosphate = N(6)-dimethylallyladenosine(37) in tRNA + diphosphate. Catalyzes the transfer of a dimethylallyl group onto the adenine at position 37 in tRNAs that read codons beginning with uridine, leading to the formation of N6-(dimethylallyl)adenosine (i(6)A). This is tRNA dimethylallyltransferase from Corynebacterium jeikeium (strain K411).